A 273-amino-acid chain; its full sequence is 4-hydroxy-tetrahydrodipicolinate reductase (273 aa).

NAD(+) is bound by residues 12-17 (GAGGRM) and E38. Residue R39 coordinates NADP(+). Residues 102–104 (GTT) and 126–129 (AANF) each bind NAD(+). H159 functions as the Proton donor/acceptor in the catalytic mechanism. Residue H160 participates in (S)-2,3,4,5-tetrahydrodipicolinate binding. K163 functions as the Proton donor in the catalytic mechanism. A (S)-2,3,4,5-tetrahydrodipicolinate-binding site is contributed by 169–170 (GT).

The protein belongs to the DapB family. In terms of assembly, homotetramer.

It localises to the cytoplasm. The enzyme catalyses (S)-2,3,4,5-tetrahydrodipicolinate + NAD(+) + H2O = (2S,4S)-4-hydroxy-2,3,4,5-tetrahydrodipicolinate + NADH + H(+). It catalyses the reaction (S)-2,3,4,5-tetrahydrodipicolinate + NADP(+) + H2O = (2S,4S)-4-hydroxy-2,3,4,5-tetrahydrodipicolinate + NADPH + H(+). The protein operates within amino-acid biosynthesis; L-lysine biosynthesis via DAP pathway; (S)-tetrahydrodipicolinate from L-aspartate: step 4/4. Catalyzes the conversion of 4-hydroxy-tetrahydrodipicolinate (HTPA) to tetrahydrodipicolinate. This chain is 4-hydroxy-tetrahydrodipicolinate reductase, found in Salmonella enteritidis PT4 (strain P125109).